The sequence spans 953 residues: ABC transporter A family member 11 (953 aa).

Helical transmembrane passes span 33–53 (CLQI…EEAM), 230–250 (GPVF…GALV), 277–297 (TWEG…GMIF), 307–327 (FVLV…LAFA), 341–361 (VGFL…TGFP), and 417–437 (VISI…WFVL). The 246-residue stretch at 519 to 764 (VQIHGLAKTY…FGTGFVATVS (246 aa)) folds into the ABC transporter domain. An ATP-binding site is contributed by 565-572 (GPNGAGKT).

It belongs to the ABC transporter superfamily. ABCA family. CPR flippase (TC 3.A.1.211) subfamily.

Its subcellular location is the membrane. This Arabidopsis thaliana (Mouse-ear cress) protein is ABC transporter A family member 11 (ABCA11).